The following is a 634-amino-acid chain: MDKIRHTEADIFKNGSKRMIATVPLRHSIRDRKPSLHFLHSLASSSSLIYRNALLHKSYKLHLQKNKSQKEKHRHSKMKIAYKDTPRNRLSRNAKKCLEDNKLVPISEVSLDPIISSNPLLRWWATSASNDSLLEELNNRFEQITNAWVQVSGDEAENCIHKKREHIENDHFKVASPLETCLLELEVSPVKMLFQKKYDLNELCTWFMQTTETQSLSLVRKANARNPLEVINTRGIKLGTKYSDFNASPFRKHFKKFALSSPSKSAEKLHILHKVANSPLLNVKSNLAIARLKRTEFKRLHHERWKREGKLHNHGTVDWNSKRRNLRFFCQNQFLNKTEGETNADIPLQGKSIVDNQCVLPPEIRGDLQQRVVMPDFKIHASFENKFKSEAKENGTNCSQKDFQKGPRLENVCPNSWRSKTLKDCRIFLRKLNCLEHRNTFKLNTIIYSPESTDSGNTHQTHMEESKRFTLRSHSARQNSFKKQSKEIENANTNNPSADEFADHLGNSKLSKCVNFDKNPDSFEVLSNLNKRKRPPWKITEMSTKRHKRQSCNSGQMANYFSKSLVSKIFGQPNFLAPSMKLVKLGAAKCTSALPHLLICPGFHTNKNIYSRDIEIIFKIYYFNNVDVISFCIW.

This is an uncharacterized protein from Homo sapiens (Human).